A 700-amino-acid chain; its full sequence is Polyribonucleotide nucleotidyltransferase (700 aa).

Mg(2+)-binding residues include aspartate 484 and aspartate 490. In terms of domain architecture, KH spans 551-610 (PRVIRMVVDPEKIREIIGPGGKTISKIIAETGVKIDIEEDGRLYITASDLRSGERAKQMI). The region spanning 620–688 (GEIYLGKVLR…KLGRISLSRK (69 aa)) is the S1 motif domain.

It belongs to the polyribonucleotide nucleotidyltransferase family. Mg(2+) serves as cofactor.

The protein localises to the cytoplasm. The catalysed reaction is RNA(n+1) + phosphate = RNA(n) + a ribonucleoside 5'-diphosphate. Functionally, involved in mRNA degradation. Catalyzes the phosphorolysis of single-stranded polyribonucleotides processively in the 3'- to 5'-direction. The chain is Polyribonucleotide nucleotidyltransferase from Thermoanaerobacter sp. (strain X514).